The following is a 745-amino-acid chain: Exocyst complex component 3 (745 aa).

Position 28 is an N6-acetyllysine (lysine 28).

This sequence belongs to the SEC6 family. In terms of assembly, the exocyst complex is composed of EXOC1, EXOC2, EXOC3, EXOC4, EXOC5, EXOC6, EXOC7 and EXOC8. Interacts with EXOC3L1. Interacts with BIRC6/bruce. Interacts with MYRIP. Interacts with SLC6A9.

It localises to the cytoplasm. It is found in the perinuclear region. Its subcellular location is the cell projection. The protein localises to the growth cone. The protein resides in the neuron projection. It localises to the midbody. It is found in the golgi apparatus. Functionally, component of the exocyst complex involved in the docking of exocytic vesicles with fusion sites on the plasma membrane. The protein is Exocyst complex component 3 (EXOC3) of Bos taurus (Bovine).